We begin with the raw amino-acid sequence, 185 residues long: Ribosome-recycling factor (185 aa).

A disordered region spans residues 137–158; sequence NQVKKLEKDKEISEDESKKAQE. Residues 140-158 are compositionally biased toward basic and acidic residues; it reads KKLEKDKEISEDESKKAQE.

It belongs to the RRF family.

The protein resides in the cytoplasm. Responsible for the release of ribosomes from messenger RNA at the termination of protein biosynthesis. May increase the efficiency of translation by recycling ribosomes from one round of translation to another. This is Ribosome-recycling factor from Helicobacter pylori (strain P12).